The chain runs to 180 residues: Large ribosomal subunit protein uL6 (180 aa).

Belongs to the universal ribosomal protein uL6 family. In terms of assembly, part of the 50S ribosomal subunit.

Functionally, this protein binds to the 23S rRNA, and is important in its secondary structure. It is located near the subunit interface in the base of the L7/L12 stalk, and near the tRNA binding site of the peptidyltransferase center. The sequence is that of Large ribosomal subunit protein uL6 from Prosthecochloris aestuarii (strain DSM 271 / SK 413).